The chain runs to 194 residues: Fe/S biogenesis protein NfuA (194 aa).

Positions 151 and 154 each coordinate [4Fe-4S] cluster.

It belongs to the NfuA family. Homodimer. [4Fe-4S] cluster is required as a cofactor.

In terms of biological role, involved in iron-sulfur cluster biogenesis. Binds a 4Fe-4S cluster, can transfer this cluster to apoproteins, and thereby intervenes in the maturation of Fe/S proteins. Could also act as a scaffold/chaperone for damaged Fe/S proteins. This is Fe/S biogenesis protein NfuA from Vibrio vulnificus (strain CMCP6).